The chain runs to 203 residues: Protein S40-6 (203 aa).

The tract at residues 1–33 is disordered; sequence MAKGRKPTTMNRSDRYLGSYTYGDSHGNSVTDE.

This sequence belongs to the senescence regulator S40 family.

The protein resides in the cytoplasm. This is Protein S40-6 from Arabidopsis thaliana (Mouse-ear cress).